We begin with the raw amino-acid sequence, 952 residues long: Bromodomain testis-specific protein (952 aa).

Residues 26–132 (RLTNQLQFLQ…KLFMQKLSQM (107 aa)) enclose the Bromo 1 domain. Residues 141–150 (GKERMKKDIQ) show a composition bias toward basic and acidic residues. Residues 141-168 (GKERMKKDIQQKTAVSSAKEQTPSKSAE) form a disordered region. Residues 151 to 167 (QKTAVSSAKEQTPSKSA) show a composition bias toward polar residues. Ser-186 is modified (phosphoserine). Residues 208–219 (KGVKRRADTTTP) carry the Nuclear localization signal motif. The tract at residues 209 to 257 (GVKRRADTTTPTTSSAKASSESPPPLREAKPANAPVKENTVKSVLPDSQ) is disordered. Positions 216–229 (TTTPTTSSAKASSE) are enriched in low complexity. A Bromo 2 domain is found at 266–375 (VKVTEQLKHC…DVFEMHFAKI (110 aa)). Disordered stretches follow at residues 392-420 (SAKA…ERVQ), 442-504 (VPLR…NAKP), 607-746 (QLNC…GCQV), and 850-930 (KHLE…RREA). The stretch at 417–442 (ERVQRLAKLQEQLNAVHQQLQVLSQV) forms a coiled coil. The segment covering 445–463 (RKLKKKNEKSKRAPKRKKV) has biased composition (basic residues). The NET domain maps to 495 to 577 (KLEEEDNAKP…ACLRKRSLKP (83 aa)). Over residues 610-619 (CRKRQTKRPA) the composition is skewed to basic residues. Residues 625-638 (PRPPLPPPPPPPPE) show a composition bias toward pro residues. The span at 646–681 (SDSSSSSSSSGSGSSSSSSSSSGSGSSSSDSSSSDS) shows a compositional bias: low complexity. Over residues 718 to 729 (SAETALVQQSTG) the composition is skewed to polar residues. Residues 837–936 (EKEVKARTQE…RREAMAGTID (100 aa)) adopt a coiled-coil conformation. Basic and acidic residues predominate over residues 850-867 (KHLEHSAKDPKVSQESQR). Over residues 874-883 (TPESSSNKVQ) the composition is skewed to polar residues. Over residues 893–902 (EQQQLPSPSE) the composition is skewed to low complexity. The segment covering 911-930 (LLKDRNLAREKEQERRRREA) has biased composition (basic and acidic residues).

It belongs to the BET family. Interacts with the acetylated N-terminus of histone H1, H2, H3 and H4. Interacts with P-TEFb components CDK9 and CCNT1/cyclin-T1. Interacts with mRNA splicing machinery proteins SRSF2, DDX5, HNRNPK and TARDBP. Interacts with SMARCE1. In terms of processing, ubiquitinated in a SPOP-dependent manner, leading to proteasomal degradation.

The protein localises to the nucleus. Its function is as follows. Testis-specific chromatin protein that specifically binds histone H4 acetylated at 'Lys-5' and 'Lys-8' (H4K5ac and H4K8ac, respectively) and plays a key role in spermatogenesis. Required in late pachytene spermatocytes: plays a role in meiotic and post-meiotic cells by binding to acetylated histones at the promoter of specific meiotic and post-meiotic genes, facilitating their activation at the appropriate time. In the post-meiotic phase of spermatogenesis, binds to hyperacetylated histones and participates in their general removal from DNA. Also recognizes and binds a subset of butyrylated histones: able to bind histone H4 butyrylated at 'Lys-8' (H4K8ac), while it is not able to bind H4 butyrylated at 'Lys-5' (H4K5ac). Also acts as a component of the splicing machinery in pachytene spermatocytes and round spermatids and participates in 3'-UTR truncation of specific mRNAs in post-meiotic spermatids. Required for chromocenter organization, a structure comprised of peri-centromeric heterochromatin. The protein is Bromodomain testis-specific protein (Brdt) of Rattus norvegicus (Rat).